The sequence spans 201 residues: Orotate phosphoribosyltransferase (201 aa).

Residues Lys-90 and Glu-113–Ser-121 each bind 5-phospho-alpha-D-ribose 1-diphosphate. Thr-117 and Arg-145 together coordinate orotate.

The protein belongs to the purine/pyrimidine phosphoribosyltransferase family. PyrE subfamily. As to quaternary structure, homodimer. Mg(2+) is required as a cofactor.

The enzyme catalyses orotidine 5'-phosphate + diphosphate = orotate + 5-phospho-alpha-D-ribose 1-diphosphate. The protein operates within pyrimidine metabolism; UMP biosynthesis via de novo pathway; UMP from orotate: step 1/2. Its function is as follows. Catalyzes the transfer of a ribosyl phosphate group from 5-phosphoribose 1-diphosphate to orotate, leading to the formation of orotidine monophosphate (OMP). This Sulfurovum sp. (strain NBC37-1) protein is Orotate phosphoribosyltransferase.